The chain runs to 458 residues: Peptidyl-prolyl cis-trans isomerase FKBP4 (458 aa).

The residue at position 1 (M1) is an N-acetylmethionine; in peptidyl-prolyl cis-trans isomerase FKBP4; alternate. Residues M1–D24 form a disordered region. T2 is modified (N-acetylthreonine; in peptidyl-prolyl cis-trans isomerase FKBP4, N-terminally processed; partial). The PPIase FKBP-type 1 domain occupies G50–K138. Position 143 is a phosphothreonine; by CK2 (T143). The PPIase FKBP-type 2 domain occupies G167–E253. Y220 is subject to Phosphotyrosine. Residues L267–T400 form an interaction with tubulin region. TPR repeat units lie at residues S270–E303, L319–N352, and E353–N386. The residue at position 282 (K282) is an N6-acetyllysine. Residue R373 is modified to Omega-N-methylarginine. The interval E428–A458 is disordered. The segment covering H434–A458 has biased composition (basic and acidic residues). T436 is modified (phosphothreonine). K441 is covalently cross-linked (Glycyl lysine isopeptide (Lys-Gly) (interchain with G-Cter in SUMO1)). The residue at position 452 (S452) is a Phosphoserine.

As to quaternary structure, homodimer. Interacts with GLMN. Associates with HSP90AA1 and HSPA1A/HSPA1B in steroid hormone receptor complexes. Also interacts with peroxisomal phytanoyl-CoA alpha-hydroxylase (PHYH). Interacts with NR3C1 and dynein. Interacts with HSF1 in the HSP90 complex. Associates with tubulin. Interacts with MAPT/TAU. Interacts (via TPR domain) with S100A1, S100A2 and S100A6; the interaction is Ca(2+) dependent. Interaction with S100A1 and S100A2 (but not with S100A6) leads to inhibition of FKBP4-HSP90 interaction. Interacts with dynein; contributes to NR3C1 transport to the nucleus. In terms of processing, phosphorylation by CK2 results in loss of HSP90 binding activity.

It is found in the cytoplasm. It localises to the cytosol. Its subcellular location is the mitochondrion. The protein resides in the nucleus. The protein localises to the cytoskeleton. It carries out the reaction [protein]-peptidylproline (omega=180) = [protein]-peptidylproline (omega=0). Inhibited by FK506. Functionally, immunophilin protein with PPIase and co-chaperone activities. Component of steroid receptors heterocomplexes through interaction with heat-shock protein 90 (HSP90). May play a role in the intracellular trafficking of heterooligomeric forms of steroid hormone receptors between cytoplasm and nuclear compartments. The isomerase activity controls neuronal growth cones via regulation of TRPC1 channel opening. Also acts as a regulator of microtubule dynamics by inhibiting MAPT/TAU ability to promote microtubule assembly. May have a protective role against oxidative stress in mitochondria. The protein is Peptidyl-prolyl cis-trans isomerase FKBP4 (Fkbp4) of Mus musculus (Mouse).